The following is a 210-amino-acid chain: Lysine N-acyltransferase MbtK (210 aa).

H130 serves as a coordination point for substrate. D168 (proton acceptor) is an active-site residue.

Belongs to the lysine N-acyltransferase MbtK family. In terms of assembly, monomer.

It participates in siderophore biosynthesis; mycobactin biosynthesis. Its function is as follows. Acyltransferase required for the direct transfer of medium- to long-chain fatty acyl moieties from a carrier protein (MbtL) on to the epsilon-amino group of lysine residue in the mycobactin core. The polypeptide is Lysine N-acyltransferase MbtK (mbtK) (Mycobacterium tuberculosis (strain CDC 1551 / Oshkosh)).